Consider the following 85-residue polypeptide: Depressant insect toxin BmK ITa1 (85 aa).

Positions Met-1 to Ala-21 are cleaved as a signal peptide. In terms of domain architecture, LCN-type CS-alpha/beta spans Asp-22–Gly-82. 4 cysteine pairs are disulfide-bonded: Cys-31–Cys-81, Cys-35–Cys-56, Cys-42–Cys-63, and Cys-46–Cys-65. Gly-82 is modified (glycine amide).

It belongs to the long (4 C-C) scorpion toxin superfamily. Sodium channel inhibitor family. Beta subfamily. As to expression, expressed by the venom gland.

Its subcellular location is the secreted. Its function is as follows. Depressant insect toxins cause a transient contraction paralysis followed by a slow flaccid paralysis. They bind voltage-independently to sodium channels (Nav) and block action potentials, primarily by depolarizing the axonal membrane and suppressing the sodium current. This is Depressant insect toxin BmK ITa1 from Olivierus martensii (Manchurian scorpion).